Here is a 279-residue protein sequence, read N- to C-terminus: Presqualene diphosphate synthase (279 aa).

The protein belongs to the phytoene/squalene synthase family. HpnD subfamily.

It catalyses the reaction 2 (2E,6E)-farnesyl diphosphate = presqualene diphosphate + diphosphate. It participates in secondary metabolite biosynthesis; hopanoid biosynthesis. Involved in the biosynthesis of the hopanoid precursor squalene (SQ) from farnesyl diphosphate (FPP). Catalyzes the first step, the formation of presqualene diphosphate (PSPP) from two molecules of FPP. The chain is Presqualene diphosphate synthase from Rhodopseudomonas palustris (strain ATCC BAA-98 / CGA009).